Reading from the N-terminus, the 160-residue chain is Protein-export protein SecB (160 aa).

It belongs to the SecB family. As to quaternary structure, homotetramer, a dimer of dimers. One homotetramer interacts with 1 SecA dimer.

The protein localises to the cytoplasm. In terms of biological role, one of the proteins required for the normal export of preproteins out of the cell cytoplasm. It is a molecular chaperone that binds to a subset of precursor proteins, maintaining them in a translocation-competent state. It also specifically binds to its receptor SecA. In Burkholderia lata (strain ATCC 17760 / DSM 23089 / LMG 22485 / NCIMB 9086 / R18194 / 383), this protein is Protein-export protein SecB.